The primary structure comprises 328 residues: Tetraacyldisaccharide 4'-kinase (328 aa).

Position 59–66 (59–66 (TAGGNGKT)) interacts with ATP.

Belongs to the LpxK family.

It carries out the reaction a lipid A disaccharide + ATP = a lipid IVA + ADP + H(+). It functions in the pathway glycolipid biosynthesis; lipid IV(A) biosynthesis; lipid IV(A) from (3R)-3-hydroxytetradecanoyl-[acyl-carrier-protein] and UDP-N-acetyl-alpha-D-glucosamine: step 6/6. In terms of biological role, transfers the gamma-phosphate of ATP to the 4'-position of a tetraacyldisaccharide 1-phosphate intermediate (termed DS-1-P) to form tetraacyldisaccharide 1,4'-bis-phosphate (lipid IVA). The protein is Tetraacyldisaccharide 4'-kinase of Aliivibrio fischeri (strain MJ11) (Vibrio fischeri).